An 85-amino-acid chain; its full sequence is UPF0386 protein Plav_1374 (85 aa).

This sequence belongs to the UPF0386 family.

The sequence is that of UPF0386 protein Plav_1374 from Parvibaculum lavamentivorans (strain DS-1 / DSM 13023 / NCIMB 13966).